The sequence spans 356 residues: uncharacterized protein (356 aa).

Residues 1–21 form the signal peptide; it reads MKLITAPCRALLALPFCYAFS.

This is an uncharacterized protein from Escherichia coli (strain K12).